A 129-amino-acid chain; its full sequence is NADH-quinone oxidoreductase subunit A (129 aa).

3 consecutive transmembrane segments (helical) span residues 9–29 (FPIG…LGLA), 68–88 (LLFI…VLLL), and 97–117 (LGWP…AGLV).

It belongs to the complex I subunit 3 family. As to quaternary structure, NDH-1 is composed of 14 different subunits. Subunits NuoA, H, J, K, L, M, N constitute the membrane sector of the complex.

The protein resides in the cell inner membrane. The enzyme catalyses a quinone + NADH + 5 H(+)(in) = a quinol + NAD(+) + 4 H(+)(out). In terms of biological role, NDH-1 shuttles electrons from NADH, via FMN and iron-sulfur (Fe-S) centers, to quinones in the respiratory chain. The immediate electron acceptor for the enzyme in this species is believed to be ubiquinone. Couples the redox reaction to proton translocation (for every two electrons transferred, four hydrogen ions are translocated across the cytoplasmic membrane), and thus conserves the redox energy in a proton gradient. This Anaeromyxobacter dehalogenans (strain 2CP-C) protein is NADH-quinone oxidoreductase subunit A.